The sequence spans 393 residues: Methylthioribose kinase (393 aa).

ATP contacts are provided by residues asparagine 38, lysine 53, and 107-109 (EDL). Residue aspartate 225 participates in substrate binding. 242 to 244 (DPE) contacts ATP. Arginine 332 is a substrate binding site.

Belongs to the methylthioribose kinase family. In terms of assembly, homodimer.

The catalysed reaction is 5-(methylsulfanyl)-D-ribose + ATP = 5-(methylsulfanyl)-alpha-D-ribose 1-phosphate + ADP + H(+). Its pathway is amino-acid biosynthesis; L-methionine biosynthesis via salvage pathway; S-methyl-5-thio-alpha-D-ribose 1-phosphate from S-methyl-5'-thioadenosine (hydrolase route): step 2/2. Functionally, catalyzes the phosphorylation of methylthioribose into methylthioribose-1-phosphate. This chain is Methylthioribose kinase, found in Bacillus cereus (strain ATCC 14579 / DSM 31 / CCUG 7414 / JCM 2152 / NBRC 15305 / NCIMB 9373 / NCTC 2599 / NRRL B-3711).